The chain runs to 1018 residues: D-2-hydroxyglutarate dehydrogenase (1018 aa).

One can recognise an FAD-binding PCMH-type domain in the interval Tyr48 to Leu281. Residues Arg402 and His500 each coordinate (R)-2-hydroxyglutarate. In terms of domain architecture, 4Fe-4S ferredoxin-type spans Phe662–Arg695. Residues Cys673, Cys676, Cys679, and Cys683 each contribute to the [4Fe-4S] cluster site.

In the N-terminal section; belongs to the FAD-binding oxidoreductase/transferase type 4 family. As to quaternary structure, homotetramer. The cofactor is [4Fe-4S] cluster. FAD serves as cofactor.

It catalyses the reaction (R)-2-hydroxyglutarate + A = 2-oxoglutarate + AH2. Its activity is regulated as follows. Activity is completely inhibited by the addition of 0.5 mM Mn(2+), Ni(2+), or Co(2+) and partially inhibited by 0.5 mM Zn(2+). In terms of biological role, catalyzes the oxidation of D-2-hydroxyglutarate (D-2-HGA) to 2-oxoglutarate. Appears to be the only D2HGDH in E.coli, providing the way to recycle D-2-HGA produced during L-serine synthesis by SerA, by converting it back to 2-oxoglutarate. The physiological molecule that functions as the primary electron acceptor during D-2-HGA oxidation by YdiJ in E.coli is unknown. Shows strict substrate specificity towards D-2-HGA, since it has no detectable activity on L-2-hydroxyglutarate, L-malate, D-malate, L-lactate, D-lactate, L-tartrate, D-tartrate, L-glycerate, D-glycerate, glutarate, or pyruvate. This chain is D-2-hydroxyglutarate dehydrogenase (ydiJ), found in Escherichia coli (strain K12).